We begin with the raw amino-acid sequence, 851 residues long: Protein translocase subunit SecA (851 aa).

Residues glutamine 88, 106-110 (GEGKT), and aspartate 496 each bind ATP. Zn(2+) contacts are provided by cysteine 828, cysteine 830, cysteine 839, and histidine 840.

This sequence belongs to the SecA family. As to quaternary structure, monomer and homodimer. Part of the essential Sec protein translocation apparatus which comprises SecA, SecYEG and auxiliary proteins SecDF-YajC and YidC. Zn(2+) serves as cofactor.

The protein resides in the cell inner membrane. The protein localises to the cytoplasm. The enzyme catalyses ATP + H2O + cellular proteinSide 1 = ADP + phosphate + cellular proteinSide 2.. Part of the Sec protein translocase complex. Interacts with the SecYEG preprotein conducting channel. Has a central role in coupling the hydrolysis of ATP to the transfer of proteins into and across the cell membrane, serving as an ATP-driven molecular motor driving the stepwise translocation of polypeptide chains across the membrane. This chain is Protein translocase subunit SecA, found in Helicobacter hepaticus (strain ATCC 51449 / 3B1).